Consider the following 158-residue polypeptide: N5-carboxyaminoimidazole ribonucleotide mutase (158 aa).

3 residues coordinate substrate: Ser10, Asp13, and Arg40.

This sequence belongs to the AIR carboxylase family. Class I subfamily.

The enzyme catalyses 5-carboxyamino-1-(5-phospho-D-ribosyl)imidazole + H(+) = 5-amino-1-(5-phospho-D-ribosyl)imidazole-4-carboxylate. The protein operates within purine metabolism; IMP biosynthesis via de novo pathway; 5-amino-1-(5-phospho-D-ribosyl)imidazole-4-carboxylate from 5-amino-1-(5-phospho-D-ribosyl)imidazole (N5-CAIR route): step 2/2. In terms of biological role, catalyzes the conversion of N5-carboxyaminoimidazole ribonucleotide (N5-CAIR) to 4-carboxy-5-aminoimidazole ribonucleotide (CAIR). The polypeptide is N5-carboxyaminoimidazole ribonucleotide mutase (Saccharolobus solfataricus (strain ATCC 35092 / DSM 1617 / JCM 11322 / P2) (Sulfolobus solfataricus)).